A 499-amino-acid polypeptide reads, in one-letter code: Aspartyl/glutamyl-tRNA(Asn/Gln) amidotransferase subunit B (499 aa).

This sequence belongs to the GatB/GatE family. GatB subfamily. In terms of assembly, heterotrimer of A, B and C subunits.

The enzyme catalyses L-glutamyl-tRNA(Gln) + L-glutamine + ATP + H2O = L-glutaminyl-tRNA(Gln) + L-glutamate + ADP + phosphate + H(+). The catalysed reaction is L-aspartyl-tRNA(Asn) + L-glutamine + ATP + H2O = L-asparaginyl-tRNA(Asn) + L-glutamate + ADP + phosphate + 2 H(+). Its function is as follows. Allows the formation of correctly charged Asn-tRNA(Asn) or Gln-tRNA(Gln) through the transamidation of misacylated Asp-tRNA(Asn) or Glu-tRNA(Gln) in organisms which lack either or both of asparaginyl-tRNA or glutaminyl-tRNA synthetases. The reaction takes place in the presence of glutamine and ATP through an activated phospho-Asp-tRNA(Asn) or phospho-Glu-tRNA(Gln). This Bartonella tribocorum (strain CIP 105476 / IBS 506) protein is Aspartyl/glutamyl-tRNA(Asn/Gln) amidotransferase subunit B.